A 279-amino-acid polypeptide reads, in one-letter code: Putative biopolymer transport protein ExbB homolog (279 aa).

3 helical membrane-spanning segments follow: residues 19–39, 126–146, and 162–182; these read SGGVITYLIAAIGIYGFITAL, IIEVAPMLGLIGTVIGIWYTF, and IYVALITTILGLAVAIILMPL.

The protein belongs to the ExbB/TolQ family.

The protein resides in the cell membrane. This Methanothermobacter thermautotrophicus (strain ATCC 29096 / DSM 1053 / JCM 10044 / NBRC 100330 / Delta H) (Methanobacterium thermoautotrophicum) protein is Putative biopolymer transport protein ExbB homolog.